Here is a 262-residue protein sequence, read N- to C-terminus: MLALEAAQLDGPHFSCLYPDGVFYDLDSCKHSSYPDSEGAPDSLWDWTVAPPVPATPYEAFDPAAAAFSHPQAAQLCYEPPTYSPAGNLELAPSLEAPGPGLPAYPTENFASQTLVPPAYAPYPSPVLSEEEDLPLDSPALEVSDSESDEALVAGPEGKGSEAGTRKKLRLYQFLLGLLTRGDMRECVWWVEPGAGVFQFSSKHKELLARRWGQQKGNRKRMTYQKLARALRNYAKTGEIRKVKRKLTYQFDSALLPAVRRA.

The TAD1 (Acidic) stretch occupies residues 1–31 (MLALEAAQLDGPHFSCLYPDGVFYDLDSCKH). The interval 41–61 (PDSLWDWTVAPPVPATPYEAF) is TAD2. The tract at residues 140–163 (ALEVSDSESDEALVAGPEGKGSEA) is disordered. The ETS DNA-binding region spans 169–252 (LRLYQFLLGL…VKRKLTYQFD (84 aa)).

The protein belongs to the ETS family. Can form homotypic interactions. Interacts with IRF4/Pip. Interacts with JUN. Interacts with TBP. May also interact with CREBBP and EP300. Interacts with NONO/p54(nrb). Expressed in plasmacytoid dendritic cells (pDCs) and B-cells, not expressed in T-cells or granulocytes. May also be enriched in stem cell populations of the liver.

The protein resides in the nucleus. Its subcellular location is the cytoplasm. Sequence specific transcriptional activator which binds to the PU-box, a purine-rich DNA sequence (5'-GAGGAA-3') that can act as a lymphoid-specific enhancer. Promotes development of plasmacytoid dendritic cells (pDCs), also known as type 2 DC precursors (pre-DC2) or natural interferon (IFN)-producing cells. These cells have the capacity to produce large amounts of interferon and block viral replication. May be required for B-cell receptor (BCR) signaling, which is necessary for normal B-cell development and antigenic stimulation. This is Transcription factor Spi-B (SPIB) from Homo sapiens (Human).